Reading from the N-terminus, the 376-residue chain is tRNA pseudouridine synthase C (376 aa).

The active site involves Asp168.

This sequence in the C-terminal section; belongs to the pseudouridine synthase RluA family. It to E.coli YqcC in the N-terminal section.

The enzyme catalyses uridine(65) in tRNA = pseudouridine(65) in tRNA. Its function is as follows. Responsible for synthesis of pseudouridine from uracil-65 in transfer RNAs. This chain is tRNA pseudouridine synthase C (truC), found in Pectobacterium carotovorum subsp. carotovorum (Erwinia carotovora subsp. carotovora).